The chain runs to 282 residues: Protein-export membrane protein SecF (282 aa).

6 consecutive transmembrane segments (helical) span residues 9–29 (IAIPIALLILSILLIGFKGIP), 120–140 (EGFKAVGFAFMFMAIVVYLYF), 149–169 (IILSALSDIIMALGAMSLLGI), 174–194 (ATIAALLMVIGYSVDSDILLT), 214–234 (KTGLTMTLTTITAMLILLIVV), and 236–256 (LFIPVADILANIATVLILALI).

Belongs to the SecD/SecF family. SecF subfamily. Part of the protein translocation apparatus. Forms a complex with SecD.

The protein localises to the cell membrane. Its function is as follows. Involved in protein export. This chain is Protein-export membrane protein SecF, found in Methanocaldococcus jannaschii (strain ATCC 43067 / DSM 2661 / JAL-1 / JCM 10045 / NBRC 100440) (Methanococcus jannaschii).